We begin with the raw amino-acid sequence, 759 residues long: MGVSQIWEFLKPYLQDSRIPLRKFVIDFNKSQKRAPRIAIDAYGWLFECGFIQNIDISARSRSRSRSPTRSPRDSDIDSSQEYYGSRSYTTTGKAVINFISRLKELLSLNVEFLLVFDGVMKPSFKRKFNHEQNATTCDDEKEYYSSWEQHVKNHEVYGNCKGLLAPSDPEFISLVRKLLDLMNISYVIACGEGEAQCVWLQVSGAVDFILSNDSDTLVFGGEKILKNYSKFYDDFGPSSITSHSPSRHHDSKESFVTVIDLPKINKVAGKKFDRLSLLFFSVLLGADYNRGVKGLGKNKSLQLAQCEDPNFSMEFYDIFKDFNLEDLTSESLRKSRYRLFQKRLYLYCKDHSVELFGRNYPVLLNQGSFEGWPSTVAIMHYFHPIVQPYFDEEVLSDKYINMAGNGHYRNLNFNELKYFLQSLNLPQISSFDKWFHDSMHEMFLLREFLSIDESDNIGKGNMRITEEKIMNIDGGKFQIPCFKIRYTTFLPNIPISSQSPLKRSNSPSRSKSPTRRQMDIMEHPNSLWLPKYLIPQSHPLVIQYYETQQLIQKEKEKKGKKSNKSRLPQKNNLDEFLRKHTSPIKSIGKVGESRKEILEPVRKRLFVDTDEDTSLEEIPAPTRLTTVDEHSDNDDDSLIFVDEITNSQSVLDSSPGKRIRDLTQDEQVDVWKDVIEISPIKKSRTTNAEKNPPESGLKSRSSITINARLQGTKMLPPNLTAPRLEREHSSVLDQLVTDAQDTVDRFVACDSDSSSTIE.

Disordered stretches follow at residues 62–83 (RSRS…SQEY), 498–518 (SQSP…TRRQ), and 683–702 (KSRT…KSRS). Over residues 500 to 512 (SPLKRSNSPSRSK) the composition is skewed to low complexity. 2 positions are modified to phosphoserine: serine 730 and serine 731.

It belongs to the XPG/RAD2 endonuclease family. GEN subfamily.

It localises to the cytoplasm. It is found in the nucleus. Endonuclease which resolves Holliday junctions by the introduction of symmetrically related cuts across the junction point, to produce nicked duplex products in which the nicks can be readily ligated. Four-way DNA intermediates, also known as Holliday junctions, are formed during homologous recombination and DNA repair, and their resolution is necessary for proper chromosome segregation. Involved in DNA-damage repair in vegetative cells. The sequence is that of Holliday junction resolvase YEN1 (YEN1) from Saccharomyces cerevisiae (strain ATCC 204508 / S288c) (Baker's yeast).